The sequence spans 463 residues: Thiamine-repressible acid phosphatase SPBC21H7.03c (463 aa).

Residues 1–18 (MQLCIISLWFLAAFIVNA) form the signal peptide. The active-site Nucleophile is His69. 4 N-linked (GlcNAc...) asparagine glycosylation sites follow: Asn98, Asn104, Asn221, and Asn324. The active-site Proton donor is Asp341. Residues Asn439 and Asn458 are each glycosylated (N-linked (GlcNAc...) asparagine).

It belongs to the histidine acid phosphatase family.

It localises to the secreted. It is found in the cell wall. It catalyses the reaction a phosphate monoester + H2O = an alcohol + phosphate. Its function is as follows. May dephosphorylate thiamine phosphates. The protein is Thiamine-repressible acid phosphatase SPBC21H7.03c of Schizosaccharomyces pombe (strain 972 / ATCC 24843) (Fission yeast).